A 457-amino-acid chain; its full sequence is Exoenzyme T (457 aa).

Positions 99–232 (LSAAEIKQMM…LRHAVESEVK (134 aa)) constitute a Bacterial Rho-GAP domain. The 177-residue stretch at 242 to 418 (DGLVEHFGLE…RVLEEATLGE (177 aa)) folds into the TR mART core domain. Catalysis depends on residues Arg322, Ser346, and Glu385.

In terms of assembly, interacts with chaperone protein SpcS; this interaction maintains ExoT in a secretion competent state within the cytoplasm. Interacts with host YWHAB.

It localises to the secreted. It catalyses the reaction L-arginyl-[protein] + NAD(+) = N(omega)-(ADP-D-ribosyl)-L-arginyl-[protein] + nicotinamide + H(+). Bifunctional effector protein that is secreted and delivered by the type III secretion system into eukaryotic target cells. ADP-ribosylates several eukaryotic proteins including CT10 regulator of kinase (Crk) proteins. In turn, induces atypical anoikis apoptosis by transforming Crk adaptor protein into a cytotoxin. Affects host cell morphology by disrupting the actin cytoskeleton. In addition to this activity, acts via its N-terminal region as a GTPase-activating protein (GAP) for host Rho GTPases including RhoA, Rac1, Cdc42 and Ras. The bacterial Rho-GAP domain activity induces mitochondrial disruption in the target host cell by activating host caspases 3 and 9 that execute cellular death. This activity also causes stress fiber disassembly. The polypeptide is Exoenzyme T (exoT) (Pseudomonas aeruginosa (strain ATCC 15692 / DSM 22644 / CIP 104116 / JCM 14847 / LMG 12228 / 1C / PRS 101 / PAO1)).